We begin with the raw amino-acid sequence, 122 residues long: Large ribosomal subunit protein uL14 (122 aa).

Belongs to the universal ribosomal protein uL14 family. As to quaternary structure, part of the 50S ribosomal subunit. Forms a cluster with proteins L3 and L19. In the 70S ribosome, L14 and L19 interact and together make contacts with the 16S rRNA in bridges B5 and B8.

Binds to 23S rRNA. Forms part of two intersubunit bridges in the 70S ribosome. In Bacillus pumilus (strain SAFR-032), this protein is Large ribosomal subunit protein uL14.